The primary structure comprises 149 residues: NPC intracellular cholesterol transporter 2 (149 aa).

An N-terminal signal peptide occupies residues methionine 1–alanine 19. 3 disulfides stabilise this stretch: cysteine 27/cysteine 140, cysteine 42/cysteine 47, and cysteine 93/cysteine 99. N-linked (GlcNAc...) asparagine glycosylation occurs at asparagine 58. The residue at position 116 (lysine 116) is an N6-acetyllysine.

The protein belongs to the NPC2 family. In terms of assembly, interacts with NPC1 (via the second lumenal domain) in a cholestrol-dependent manner. Interacts with NUS1/NgBR, the interaction stabilizes NCP2 and regulates cholesterol trafficking. Interacts with DHDDS. Interacts with NEDD4L (via C2 domain). Interacts with NPC1L1. As to expression, expressed in kidney, spleen, liver and mammary gland, but not in testis.

The protein localises to the secreted. The protein resides in the endoplasmic reticulum. Its subcellular location is the lysosome. It carries out the reaction cholesterol(in) = cholesterol(out). Functionally, intracellular cholesterol transporter which acts in concert with NPC1 and plays an important role in the egress of cholesterol from the lysosomal compartment. Unesterified cholesterol that has been released from LDLs in the lumen of the late endosomes/lysosomes is transferred by NPC2 to the cholesterol-binding pocket in the N-terminal domain of NPC1. May bind and mobilize cholesterol that is associated with membranes. NPC2 binds cholesterol with a 1:1 stoichiometry. Can bind a variety of sterols, including lathosterol, desmosterol and the plant sterols stigmasterol and beta-sitosterol. The secreted form of NCP2 regulates biliary cholesterol secretion via stimulation of ABCG5/ABCG8-mediated cholesterol transport. This is NPC intracellular cholesterol transporter 2 from Bos taurus (Bovine).